We begin with the raw amino-acid sequence, 170 residues long: Calcineurin subunit B type 1 (170 aa).

4 consecutive EF-hand domains span residues 18–46 (DEIRRLGKRFRKLDLDNSGALSIDEFMSL), 50–85 (QQNPLVQRVIDIFDADGNGEVDFKEFIQGVSQFSVR), 87–122 (DKLSKLRFAFRIYDMDNDGYISNGELFQVLKMMVGN), and 128–163 (QLQQIVDKTICFADKDEDGKISFDEFCSVVGNTDIH). Ca(2+) contacts are provided by Asp31, Asp33, Ser35, Glu42, Asp63, Asp65, Asn67, Glu69, Glu74, Asp100, Asp102, Asp104, Tyr106, Glu111, Asp141, Asp143, Asp145, Lys147, and Glu152.

This sequence belongs to the calcineurin regulatory subunit family. Composed of two components (A and B), the A component is the catalytic subunit and the B component confers calcium sensitivity.

Calcineurin is a calcium-binding and calmodulin-binding protein found in all cells from yeast to mammals, and a calcium-dependent, calmodulin-stimulated protein phosphatase. The sequence is that of Calcineurin subunit B type 1 (CanB) from Drosophila melanogaster (Fruit fly).